Here is a 103-residue protein sequence, read N- to C-terminus: O2 contryphan Vc1 (103 aa).

The signal sequence occupies residues 1 to 23 (MGKLTILFLVAAALLSTQVMVQG). The propeptide occupies 24–67 (DGAHERTEAEEPQHHGAKRQDGTGGYPVDDVDMMQRIFRTPLKR). Positions 25–44 (GAHERTEAEEPQHHGAKRQD) are enriched in basic and acidic residues. Residues 25 to 50 (GAHERTEAEEPQHHGAKRQDGTGGYP) are disordered. The residue at position 68 (Gln68) is a Pyrrolidone carboxylic acid. A disulfide bridge connects residues Cys70 and Cys83. A propeptide spanning residues 99-103 (RRGRQ) is cleaved from the precursor.

The protein belongs to the O2 superfamily. Post-translationally, pyrrolidone carboxylic acid at position 1 has no significant effect on the structure of contryphan-Vc1. In terms of tissue distribution, expressed by the venom gland.

It is found in the secreted. In terms of biological role, unknown. Intracranial injection of the peptide into mice does not produce toxic effects. In addition, the peptide does not produce any observable changes to normal or depolarization-induced intracellular calcium levels in mouse dorsal root ganglion cells. The polypeptide is O2 contryphan Vc1 (Conus victoriae (Queen Victoria cone)).